The following is a 706-amino-acid chain: Serotransferrin (706 aa).

Positions 1–19 are cleaved as a signal peptide; it reads MRLAIRALLACAVLGLCLA. 2 consecutive Transferrin-like domains span residues 23–349 and 363–691; these read VRWC…NLRE and VKWC…NLRQ. 2 cysteine pairs are disulfide-bonded: C26/C64 and C36/C55. At R40 the chain carries Dimethylated arginine. Positions 79 and 111 each coordinate Fe(3+). Disulfide bonds link C134–C215, C174–C190, C177–C198, C187–C200, and C248–C262. Hydrogencarbonate contacts are provided by T136, R140, A142, and G143. Y209 is a binding site for Fe(3+). Residue H270 participates in Fe(3+) binding. Intrachain disulfides connect C360–C623, C366–C398, C376–C389, C423–C701, C441–C664, C474–C550, C498–C692, C508–C522, C519–C533, C590–C604, and C642–C647. A Phosphoserine modification is found at S391. The Fe(3+) site is built by D413 and Y449. The hydrogencarbonate site is built by T476, R480, A482, and G483. N515 carries N-linked (GlcNAc...) asparagine glycosylation. Position 544 (Y544) interacts with Fe(3+). A Fe(3+)-binding site is contributed by H612. S693 is modified (phosphoserine).

The protein belongs to the transferrin family. As to quaternary structure, monomer. Part of a complex composed of SLC40A1/ferroportin, TF/transferrin and HEPH/hephaestin that transfers iron from cells to transferrin. As to expression, expressed by the liver and secreted in plasma.

The protein localises to the secreted. Functionally, transferrins are iron binding transport proteins which can bind two Fe(3+) ions in association with the binding of an anion, usually bicarbonate. It is responsible for the transport of iron from sites of absorption and heme degradation to those of storage and utilization. Serum transferrin may also have a further role in stimulating cell proliferation. The sequence is that of Serotransferrin (TF) from Equus caballus (Horse).